A 2260-amino-acid chain; its full sequence is Protein Ycf2 (2260 aa).

1614 to 1621 (GSIGTGRS) is an ATP binding site.

It belongs to the Ycf2 family.

It localises to the plastid. The protein resides in the chloroplast stroma. Its function is as follows. Probable ATPase of unknown function. Its presence in a non-photosynthetic plant (Epifagus virginiana) and experiments in tobacco indicate that it has an essential function which is probably not related to photosynthesis. In Dioscorea elephantipes (Elephant's foot yam), this protein is Protein Ycf2.